The primary structure comprises 224 residues: Phosphoribosyltransferase domain-containing protein 1 (224 aa).

Positions 140 and 141 each coordinate Mg(2+). GMP-binding positions include 140–148 (EDIINTGRT), K172, 193–194 (FV), and D200. D200 is a Mg(2+) binding site.

It belongs to the purine/pyrimidine phosphoribosyltransferase family.

This chain is Phosphoribosyltransferase domain-containing protein 1 (prtfdc1), found in Xenopus tropicalis (Western clawed frog).